The chain runs to 317 residues: Lipoyl synthase (317 aa).

The interval 1–22 (MVTVVNTLNRPRHPEKQNRPET) is disordered. Residues 12-22 (RHPEKQNRPET) are compositionally biased toward basic and acidic residues. Positions 57, 62, 68, 83, 87, 90, and 296 each coordinate [4Fe-4S] cluster. One can recognise a Radical SAM core domain in the interval 69–285 (WEKKHATFMI…ETVAYAKGFL (217 aa)).

This sequence belongs to the radical SAM superfamily. Lipoyl synthase family. Requires [4Fe-4S] cluster as cofactor.

It localises to the cytoplasm. The enzyme catalyses [[Fe-S] cluster scaffold protein carrying a second [4Fe-4S](2+) cluster] + N(6)-octanoyl-L-lysyl-[protein] + 2 oxidized [2Fe-2S]-[ferredoxin] + 2 S-adenosyl-L-methionine + 4 H(+) = [[Fe-S] cluster scaffold protein] + N(6)-[(R)-dihydrolipoyl]-L-lysyl-[protein] + 4 Fe(3+) + 2 hydrogen sulfide + 2 5'-deoxyadenosine + 2 L-methionine + 2 reduced [2Fe-2S]-[ferredoxin]. Its pathway is protein modification; protein lipoylation via endogenous pathway; protein N(6)-(lipoyl)lysine from octanoyl-[acyl-carrier-protein]: step 2/2. Functionally, catalyzes the radical-mediated insertion of two sulfur atoms into the C-6 and C-8 positions of the octanoyl moiety bound to the lipoyl domains of lipoate-dependent enzymes, thereby converting the octanoylated domains into lipoylated derivatives. The protein is Lipoyl synthase of Azorhizobium caulinodans (strain ATCC 43989 / DSM 5975 / JCM 20966 / LMG 6465 / NBRC 14845 / NCIMB 13405 / ORS 571).